Here is a 111-residue protein sequence, read N- to C-terminus: Antirepressor protein CarS (111 aa).

Monomer. Interacts with CarA and CarH.

Its function is as follows. Involved in carotenoid biosynthesis. Antagonizes the transcriptional repressor proteins CarA and CarH by preventing their binding to DNA. Can also dissociate preformed CarA-DNA complexes. Does not bind DNA. This Myxococcus xanthus protein is Antirepressor protein CarS (carS).